A 517-amino-acid chain; its full sequence is NEDD8-activating enzyme E1 regulatory subunit (517 aa).

Belongs to the ubiquitin-activating E1 family. ULA1 subfamily. Heterodimer of uba3 and ula1. The complex binds NEDD8/ubl1 and ubc12.

It localises to the cytoplasm. Its subcellular location is the nucleus. It participates in protein modification; protein neddylation. In terms of biological role, regulatory subunit of the dimeric uba3-ula1 E1 enzyme. E1 activates NEDD8/ubl1 by first adenylating its C-terminal glycine residue with ATP, thereafter linking this residue to the side chain of the catalytic cysteine, yielding a NEDD8-UBA3 thioester and free AMP. E1 finally transfers NEDD8 to the catalytic cysteine of ubc12. The sequence is that of NEDD8-activating enzyme E1 regulatory subunit (uba5) from Schizosaccharomyces pombe (strain 972 / ATCC 24843) (Fission yeast).